The primary structure comprises 379 residues: Putative glutamate--cysteine ligase 2 (379 aa).

Belongs to the glutamate--cysteine ligase type 2 family. YbdK subfamily.

The enzyme catalyses L-cysteine + L-glutamate + ATP = gamma-L-glutamyl-L-cysteine + ADP + phosphate + H(+). In terms of biological role, ATP-dependent carboxylate-amine ligase which exhibits weak glutamate--cysteine ligase activity. This chain is Putative glutamate--cysteine ligase 2, found in Roseiflexus castenholzii (strain DSM 13941 / HLO8).